A 533-amino-acid chain; its full sequence is MGVFRFISISLAAVSAANAAQILSMPHAQTVPNSYIVMMKDDTSDDDFNHHQSWLQSTHTHNITRRATIQNAGMRHKYNFSKMKGYSGIFDEETIKDIAKDPKVMFVEPDTIISVHGKVEQSNVPSWGLARISNPQPGAGSYIYDSSAGEGITVYSVDTGVDVNHEDFEGRAIWGSNQVNDGDDRDGSGHGTHTSGTMVGKEFGIAKKAKLVAVKVLGNDGSGPTSGIVAGINWSVEHARQNGGTKKAVMNMSLGGSSSSALNRAAAQAVEQGMFLSVAAGNDNQDAQSSSPASEPSVCTVGSSAEDDSRSSFSNWGPAIDLFAPGSNIISARPGGGSQSMSGTSMAAPHVAGLAAYLMALEGISGGAVCDRLKELGTSSITDAGPGTPTNVLINNGGAKGGKPNPNPAPSPSPSPSQPSEPQQPTPSQPGQPGEPFPGEPQQPTPSQPGQPGEPFPGEPFPGEPFPGEPFPGESFPGESFPGESAPAPAPMPPSPQHPHTPYPGGDNFDFDGLWKKYFGGEHWRKMFSSFWN.

Positions 1 to 19 (MGVFRFISISLAAVSAANA) are cleaved as a signal peptide. A propeptide spanning residues 20 to 116 (AQILSMPHAQ…VEPDTIISVH (97 aa)) is cleaved from the precursor. The Inhibitor I9 domain maps to 34–115 (SYIVMMKDDT…FVEPDTIISV (82 aa)). A Peptidase S8 domain is found at 126–400 (SWGLARISNP…NVLINNGGAK (275 aa)). Residues D158 and H190 each act as charge relay system in the active site. The disordered stretch occupies residues 175–198 (GSNQVNDGDDRDGSGHGTHTSGTM). 2 N-linked (GlcNAc...) asparagine glycosylation sites follow: N233 and N251. Residues 282–294 (NDNQDAQSSSPAS) show a composition bias toward polar residues. Residues 282 to 312 (NDNQDAQSSSPASEPSVCTVGSSAEDDSRSS) form a disordered region. S345 functions as the Charge relay system in the catalytic mechanism. Over residues 378–394 (TSSITDAGPGTPTNVLI) the composition is skewed to polar residues. The interval 378-512 (TSSITDAGPG…YPGGDNFDFD (135 aa)) is disordered. A compositionally biased stretch (pro residues) spans 405 to 470 (NPNPAPSPSP…FPGEPFPGEP (66 aa)). Residues 471 to 487 (FPGESFPGESFPGESAP) are compositionally biased toward low complexity. Positions 488–502 (APAPMPPSPQHPHTP) are enriched in pro residues.

The protein belongs to the peptidase S8 family.

It localises to the secreted. Functionally, secreted subtilisin-like serine protease with keratinolytic activity that contributes to pathogenicity. This is Subtilisin-like protease 1 (SUB1) from Arthroderma benhamiae (strain ATCC MYA-4681 / CBS 112371) (Trichophyton mentagrophytes).